A 542-amino-acid polypeptide reads, in one-letter code: Probable myosin-binding protein 6 (542 aa).

A signal peptide spans 1-21; sequence MYIQLLCFFLFLFLLLQATMS. A helical transmembrane segment spans residues 39 to 59; the sequence is FLIYTVLEWSLIVFLFIDGVI. Residues 219-239 are disordered; that stretch reads SFLAPAPSPRVSHNKLSENES. Residues 300–398 enclose the GTD-binding domain; that stretch reads SILNQLKKEV…ELEAEFEVYR (99 aa). Residues 419-480 are disordered; it reads GNASAYDDCQ…DEEKGSESKE (62 aa). Residues 437–456 are compositionally biased toward polar residues; that stretch reads AVSSSNQQENGENIDQNGQS. Residues 471 to 480 are compositionally biased toward basic and acidic residues; that stretch reads DEEKGSESKE.

It localises to the membrane. Its function is as follows. Probable membrane-anchored myosin receptors. The protein is Probable myosin-binding protein 6 of Arabidopsis thaliana (Mouse-ear cress).